The chain runs to 345 residues: MRKRISAIIMTLFMVLVSCNSGGVAEDPKTVYLTSIANLGKGFLDVFVTFGDMVAGAFGIKADTKKSDIGKYFNDIEKTMTTVKKRLQDEVAKNGNYVKVKEVVDKFVADVLDKIAAGAKKQLRATGDAAIGMLLNEDAAPAEVASVNSLVKGIKEIVGVVLKDNEGDAAATKTADAEKKSVGKLLGKGAADGTETQAAAASASIGAITGADILQAIAKSGKAGAGEIKIEEAKNAAEIAAAKADSKDLAIDSAKKDAVIAAGIALRAMAKDGKFAAKNNEEKSANAVNGAAASAVGKTLSTLIIAIRNTVDSGLKTINEALATVKQEDKSAEATNPAEATTSGQ.

The first 18 residues, 1–18 (MRKRISAIIMTLFMVLVS), serve as a signal peptide directing secretion. Cysteine 19 carries N-palmitoyl cysteine lipidation. Cysteine 19 is lipidated: S-diacylglycerol cysteine.

The protein belongs to the variable large protein (Vlp) family. Delta subfamily.

Its subcellular location is the cell outer membrane. Its function is as follows. The Vlp and Vsp proteins are antigenically distinct proteins, only one vlp or vsp gene is transcriptionally active at any one time. Switching between these genes is a mechanism of host immune response evasion. This chain is Variable large protein 23, found in Borrelia hermsii.